Consider the following 64-residue polypeptide: Beta-defensin 2 (64 aa).

The N-terminal stretch at 1 to 22 is a signal peptide; it reads MRLHHLLLVLFFVVLSAGSGFT. Disulfide bonds link Cys-31-Cys-60, Cys-38-Cys-53, and Cys-43-Cys-61.

It belongs to the beta-defensin family.

It localises to the secreted. Its function is as follows. Has bactericidal activity. The chain is Beta-defensin 2 (DEFB2) from Ovis aries (Sheep).